The primary structure comprises 479 residues: UDP-N-acetylmuramate--L-alanine ligase (479 aa).

An ATP-binding site is contributed by 127 to 133 (GTHGKTT).

Belongs to the MurCDEF family.

It localises to the cytoplasm. It carries out the reaction UDP-N-acetyl-alpha-D-muramate + L-alanine + ATP = UDP-N-acetyl-alpha-D-muramoyl-L-alanine + ADP + phosphate + H(+). It functions in the pathway cell wall biogenesis; peptidoglycan biosynthesis. Its function is as follows. Cell wall formation. In Shewanella denitrificans (strain OS217 / ATCC BAA-1090 / DSM 15013), this protein is UDP-N-acetylmuramate--L-alanine ligase.